Here is a 187-residue protein sequence, read N- to C-terminus: Ribosome-recycling factor (187 aa).

This sequence belongs to the RRF family.

Its subcellular location is the cytoplasm. Responsible for the release of ribosomes from messenger RNA at the termination of protein biosynthesis. May increase the efficiency of translation by recycling ribosomes from one round of translation to another. The sequence is that of Ribosome-recycling factor from Ligilactobacillus salivarius (strain UCC118) (Lactobacillus salivarius).